The sequence spans 305 residues: Oxygen-dependent coproporphyrinogen-III oxidase (305 aa).

Residue S98 coordinates substrate. A divalent metal cation-binding residues include H102 and H112. The active-site Proton donor is H112. Residue N114–R116 participates in substrate binding. Residues H151 and H181 each coordinate a divalent metal cation. Residues Y246–E281 form an important for dimerization region. G264–R266 serves as a coordination point for substrate.

This sequence belongs to the aerobic coproporphyrinogen-III oxidase family. Homodimer. A divalent metal cation serves as cofactor.

The protein localises to the cytoplasm. It carries out the reaction coproporphyrinogen III + O2 + 2 H(+) = protoporphyrinogen IX + 2 CO2 + 2 H2O. The protein operates within porphyrin-containing compound metabolism; protoporphyrin-IX biosynthesis; protoporphyrinogen-IX from coproporphyrinogen-III (O2 route): step 1/1. Functionally, involved in the heme biosynthesis. Catalyzes the aerobic oxidative decarboxylation of propionate groups of rings A and B of coproporphyrinogen-III to yield the vinyl groups in protoporphyrinogen-IX. This chain is Oxygen-dependent coproporphyrinogen-III oxidase, found in Vibrio atlanticus (strain LGP32) (Vibrio splendidus (strain Mel32)).